Consider the following 62-residue polypeptide: Photosystem II reaction center protein Z (62 aa).

Helical transmembrane passes span A8–A28 and F41–V61.

This sequence belongs to the PsbZ family. PSII is composed of 1 copy each of membrane proteins PsbA, PsbB, PsbC, PsbD, PsbE, PsbF, PsbH, PsbI, PsbJ, PsbK, PsbL, PsbM, PsbT, PsbY, PsbZ, Psb30/Ycf12, at least 3 peripheral proteins of the oxygen-evolving complex and a large number of cofactors. It forms dimeric complexes.

Its subcellular location is the plastid. It is found in the chloroplast thylakoid membrane. Its function is as follows. May control the interaction of photosystem II (PSII) cores with the light-harvesting antenna, regulates electron flow through the 2 photosystem reaction centers. PSII is a light-driven water plastoquinone oxidoreductase, using light energy to abstract electrons from H(2)O, generating a proton gradient subsequently used for ATP formation. The protein is Photosystem II reaction center protein Z of Nephroselmis olivacea (Green alga).